We begin with the raw amino-acid sequence, 490 residues long: Acetyl-coenzyme A carboxylase carboxyl transferase subunit beta, chloroplastic (490 aa).

The region spanning 221-490 is the CoA carboxyltransferase N-terminal domain; sequence LWVQCENCYG…PLNQKSSKIK (270 aa). Residues cysteine 225, cysteine 228, cysteine 244, and cysteine 247 each contribute to the Zn(2+) site. Residues 225 to 247 form a C4-type zinc finger; the sequence is CENCYGLNYKKFLKSKMNICEQC.

It belongs to the AccD/PCCB family. In terms of assembly, acetyl-CoA carboxylase is a heterohexamer composed of biotin carboxyl carrier protein, biotin carboxylase and 2 subunits each of ACCase subunit alpha and ACCase plastid-coded subunit beta (accD). It depends on Zn(2+) as a cofactor. As to expression, expressed in leaves, ripening and mature fruit.

Its subcellular location is the plastid. It localises to the chloroplast stroma. The protein resides in the chromoplast stroma. It carries out the reaction N(6)-carboxybiotinyl-L-lysyl-[protein] + acetyl-CoA = N(6)-biotinyl-L-lysyl-[protein] + malonyl-CoA. Its pathway is lipid metabolism; malonyl-CoA biosynthesis; malonyl-CoA from acetyl-CoA: step 1/1. Functionally, component of the acetyl coenzyme A carboxylase (ACC) complex. Biotin carboxylase (BC) catalyzes the carboxylation of biotin on its carrier protein (BCCP) and then the CO(2) group is transferred by the transcarboxylase to acetyl-CoA to form malonyl-CoA. Is up-regulated upon chromoplast differentiation, presumably for fatty acid biosynthesis. This chain is Acetyl-coenzyme A carboxylase carboxyl transferase subunit beta, chloroplastic, found in Solanum lycopersicum (Tomato).